Consider the following 522-residue polypeptide: Gypsy retrotransposon integrase-like protein 1 (522 aa).

In terms of domain architecture, Integrase catalytic spans 135–292; it reads KVENPWSLVT…TPYFQMFSRN (158 aa). Ser502 bears the Phosphoserine mark.

The polypeptide is Gypsy retrotransposon integrase-like protein 1 (GIN1) (Pongo abelii (Sumatran orangutan)).